Consider the following 154-residue polypeptide: Myoglobin (154 aa).

In terms of domain architecture, Globin spans 2–148 (GLSDGEWQLV…FRNDIAAKYK (147 aa)). S4 bears the Phosphoserine mark. H65 is a nitrite binding site. H65 is a binding site for O2. Phosphothreonine occurs at positions 68 and 75. H94 is a heme b binding site. S121 carries the phosphoserine modification.

Belongs to the globin family. Monomeric.

The protein localises to the cytoplasm. The protein resides in the sarcoplasm. It catalyses the reaction Fe(III)-heme b-[protein] + nitric oxide + H2O = Fe(II)-heme b-[protein] + nitrite + 2 H(+). It carries out the reaction H2O2 + AH2 = A + 2 H2O. Functionally, monomeric heme protein which primary function is to store oxygen and facilitate its diffusion within muscle tissues. Reversibly binds oxygen through a pentacoordinated heme iron and enables its timely and efficient release as needed during periods of heightened demand. Depending on the oxidative conditions of tissues and cells, and in addition to its ability to bind oxygen, it also has a nitrite reductase activity whereby it regulates the production of bioactive nitric oxide. Under stress conditions, like hypoxia and anoxia, it also protects cells against reactive oxygen species thanks to its pseudoperoxidase activity. This Mus musculus (Mouse) protein is Myoglobin.